A 116-amino-acid chain; its full sequence is Phosphoribosyl-AMP cyclohydrolase (116 aa).

D85 is a binding site for Mg(2+). C86 contacts Zn(2+). Mg(2+) is bound by residues D87 and D89. The Zn(2+) site is built by C102 and C109.

The protein belongs to the PRA-CH family. As to quaternary structure, homodimer. Mg(2+) serves as cofactor. Requires Zn(2+) as cofactor.

The protein localises to the cytoplasm. It catalyses the reaction 1-(5-phospho-beta-D-ribosyl)-5'-AMP + H2O = 1-(5-phospho-beta-D-ribosyl)-5-[(5-phospho-beta-D-ribosylamino)methylideneamino]imidazole-4-carboxamide. The protein operates within amino-acid biosynthesis; L-histidine biosynthesis; L-histidine from 5-phospho-alpha-D-ribose 1-diphosphate: step 3/9. In terms of biological role, catalyzes the hydrolysis of the adenine ring of phosphoribosyl-AMP. This chain is Phosphoribosyl-AMP cyclohydrolase, found in Corynebacterium diphtheriae (strain ATCC 700971 / NCTC 13129 / Biotype gravis).